Here is a 193-residue protein sequence, read N- to C-terminus: Probable DNA-directed RNA polymerase subunit delta (193 aa).

Positions 14–83 constitute an HTH HARE-type domain; that stretch reads LSMIEVARAI…GENKWGLRSW (70 aa). Acidic residues-rich tracts occupy residues 117–134 and 142–193; these read GDDD…DEDN and EYDD…VVDE. The disordered stretch occupies residues 117 to 193; sequence GDDDAIDYGH…EYSDEEVVDE (77 aa).

Belongs to the RpoE family. In terms of assembly, RNAP is composed of a core of 2 alpha, a beta and a beta' subunits. The core is associated with a delta subunit and one of several sigma factors.

Functionally, participates in both the initiation and recycling phases of transcription. In the presence of the delta subunit, RNAP displays an increased specificity of transcription, a decreased affinity for nucleic acids, and an increased efficiency of RNA synthesis because of enhanced recycling. The protein is Probable DNA-directed RNA polymerase subunit delta of Streptococcus suis (strain 05ZYH33).